Consider the following 211-residue polypeptide: Protein TMA23 (211 aa).

The segment at 115–211 is disordered; the sequence is ASFVVSSASS…SARRDRKEHI (97 aa). Over residues 116–125 the composition is skewed to low complexity; the sequence is SFVVSSASSS. Basic residues-rich tracts occupy residues 140 to 149, 158 to 176, and 185 to 197; these read VKRKKLKKDK, KKKK…KKSK, and SKHK…KKHK. Positions 198-211 are enriched in basic and acidic residues; that stretch reads KEESSARRDRKEHI.

In terms of assembly, forms homooligomers. Associates with ribosomal complexes.

Its subcellular location is the nucleus. It is found in the nucleolus. Functionally, trans-acting factors of the ribosome biogenesis process. This Saccharomyces cerevisiae (strain ATCC 204508 / S288c) (Baker's yeast) protein is Protein TMA23 (TMA23).